The following is a 249-amino-acid chain: Seipin homolog (249 aa).

The Cytoplasmic portion of the chain corresponds to 1 to 10 (MGYLVKLFKL). The helical transmembrane segment at 11 to 31 (VVWMLVIGLFSIPSLVSYVIF) threads the bilayer. Topologically, residues 32–212 (YDTVIPHSVI…GMRWFMYTHK (181 aa)) are lumenal. The chain crosses the membrane as a helical span at residues 213–233 (VSAFLVFTSLFWFTGITSTII). Residues 234–249 (TYLIVSSTSETKATRR) are Cytoplasmic-facing.

Belongs to the seipin family.

The protein localises to the endoplasmic reticulum membrane. In terms of biological role, involved in lipid metabolism and lipid droplet (LD) morphology, number, and size. Facilitates initiation of LD formation, and ensures that vectorial budding of LDs from the ER is directed towards the cytoplasm. The sequence is that of Seipin homolog from Schizosaccharomyces pombe (strain 972 / ATCC 24843) (Fission yeast).